The sequence spans 433 residues: Mblk-1-related factor 1 (433 aa).

Residues 145-197 enclose the HTH psq-type 1 domain; that stretch reads NKSNILRRNYTVEDLTQAVEDIRQGKLGTRRASVVYGIPRSTLRNKIYKLEAE. The segment at residues 173–193 is a DNA-binding region (H-T-H motif); the sequence is TRRASVVYGIPRSTLRNKIYK. The span at 235-254 shows a compositional bias: low complexity; sequence GNQSDSSSSSPHASMCPSSP. Disordered stretches follow at residues 235–278 and 304–338; these read GNQS…SCSP and ANISNVDTHTPTPISEKSQKMHGNEEWKRSRPKRG. The span at 304 to 319 shows a compositional bias: polar residues; that stretch reads ANISNVDTHTPTPISE. Positions 320–332 are enriched in basic and acidic residues; it reads KSQKMHGNEEWKR. Positions 334–386 constitute an HTH psq-type 2 domain; the sequence is RPKRGQYRKYDKNALDEAVRSVRRGEMTVHRAGSFFGVPHSTLEYKVKERNLM. Residues 362-382 constitute a DNA-binding region (H-T-H motif); that stretch reads VHRAGSFFGVPHSTLEYKVKE. The interval 393 to 433 is disordered; that stretch reads LYSHDSSTSEDGSQLVTSTISEKSDSSSHTSTPIPFPISLV. Residues 396-408 show a composition bias toward polar residues; sequence HDSSTSEDGSQLV. Positions 409-424 are enriched in low complexity; sequence TSTISEKSDSSSHTST.

Expressed in AIM, RIC, AIZ, ADF, ADL, ASK, AWA, AUA, AIN, RIH (or RIR) and RIF head neurons and, in PVP, PVQ and DVA (or DVC) tail neurons, some intestinal cells, somatic gonad and vulva.

It is found in the nucleus. In terms of biological role, may act as transcription activator. Plays a role in neurogenesis by regulating neurite pruning between left and right AIM neurons and left and right RIF neurons during larval development. Regulates olfactory plasticity. This chain is Mblk-1-related factor 1, found in Caenorhabditis elegans.